A 373-amino-acid chain; its full sequence is Glutamate 5-kinase (373 aa).

ATP is bound at residue Lys-15. Residues Ser-55, Asp-142, and Asn-154 each coordinate substrate. Residue 174–175 coordinates ATP; it reads TD. Residues 281–359 form the PUA domain; that stretch reads RGSVVLDDGA…SQIEAVLGYV (79 aa).

Belongs to the glutamate 5-kinase family.

It localises to the cytoplasm. The enzyme catalyses L-glutamate + ATP = L-glutamyl 5-phosphate + ADP. The protein operates within amino-acid biosynthesis; L-proline biosynthesis; L-glutamate 5-semialdehyde from L-glutamate: step 1/2. Its function is as follows. Catalyzes the transfer of a phosphate group to glutamate to form L-glutamate 5-phosphate. This Nitrosomonas eutropha (strain DSM 101675 / C91 / Nm57) protein is Glutamate 5-kinase.